A 463-amino-acid chain; its full sequence is Exodeoxyribonuclease 7 large subunit (463 aa).

This sequence belongs to the XseA family. As to quaternary structure, heterooligomer composed of large and small subunits.

It is found in the cytoplasm. It catalyses the reaction Exonucleolytic cleavage in either 5'- to 3'- or 3'- to 5'-direction to yield nucleoside 5'-phosphates.. In terms of biological role, bidirectionally degrades single-stranded DNA into large acid-insoluble oligonucleotides, which are then degraded further into small acid-soluble oligonucleotides. The protein is Exodeoxyribonuclease 7 large subunit of Pseudomonas syringae pv. syringae (strain B728a).